Reading from the N-terminus, the 377-residue chain is MATAKTWKIAREIGDAVIKASRNPNRRWYGPHMAAAVRAISERIPLVDFVLEIRDARIPLSSEYELLRKFSPLPSKRIIVLNKMELADPLELKKCIDYFEERNYLSYAVNSHNKDCVKQLLNFLQSQVRELHKAGHSGHTTTMMLLGIPNVGKSALSNSLHHIGRISAAEKGKLKHTTVSSQPGDTKDIMSLKIGSHPNVYVLDTPGIFPPNLYDAEICAKLALTGAIPDDIVGELKLARLFLTILNSSHEYKKWAKLCKSQDLTESLSDESSKSDAKHKRQYATDHTQDFIVYDVRRVLYETISAFDGNLEDEISMGNLIETQFAALRSVLRVPEEASEFADLRVASKILNLYRTGRLGHYTLEHVSALAKSYTYL.

The N-terminal 21 residues, 1 to 21, are a transit peptide targeting the mitochondrion; it reads MATAKTWKIAREIGDAVIKAS. Positions 34–211 constitute a CP-type G domain; sequence AAAVRAISER…VLDTPGIFPP (178 aa). A DARXP motif motif is present at residues 55–59; that stretch reads DARIP. GTP contacts are provided by residues 82–85, 110–111, 150–155, and Gly207; these read NKME, NS, and NVGKSA.

This sequence belongs to the TRAFAC class YlqF/YawG GTPase family. MTG1 subfamily.

Its subcellular location is the mitochondrion. In terms of biological role, GTPase that may function in mitochondrial ribosome assembly. In Arabidopsis thaliana (Mouse-ear cress), this protein is DAR GTPase 2, mitochondrial.